Here is a 270-residue protein sequence, read N- to C-terminus: Formamidopyrimidine-DNA glycosylase (270 aa).

The Schiff-base intermediate with DNA role is filled by Pro-2. Glu-3 functions as the Proton donor in the catalytic mechanism. Catalysis depends on Lys-58, which acts as the Proton donor; for beta-elimination activity. Residues His-91, Arg-110, and Arg-151 each contribute to the DNA site. The FPG-type zinc-finger motif lies at 236 to 270 (FVYGRGGQPCKVCGTELREVKLGQRASVYCPRCQR). The Proton donor; for delta-elimination activity role is filled by Arg-260.

The protein belongs to the FPG family. As to quaternary structure, monomer. The cofactor is Zn(2+).

The enzyme catalyses Hydrolysis of DNA containing ring-opened 7-methylguanine residues, releasing 2,6-diamino-4-hydroxy-5-(N-methyl)formamidopyrimidine.. It catalyses the reaction 2'-deoxyribonucleotide-(2'-deoxyribose 5'-phosphate)-2'-deoxyribonucleotide-DNA = a 3'-end 2'-deoxyribonucleotide-(2,3-dehydro-2,3-deoxyribose 5'-phosphate)-DNA + a 5'-end 5'-phospho-2'-deoxyribonucleoside-DNA + H(+). Functionally, involved in base excision repair of DNA damaged by oxidation or by mutagenic agents. Acts as a DNA glycosylase that recognizes and removes damaged bases. Has a preference for oxidized purines, such as 7,8-dihydro-8-oxoguanine (8-oxoG). Has AP (apurinic/apyrimidinic) lyase activity and introduces nicks in the DNA strand. Cleaves the DNA backbone by beta-delta elimination to generate a single-strand break at the site of the removed base with both 3'- and 5'-phosphates. The polypeptide is Formamidopyrimidine-DNA glycosylase (Pseudomonas putida (strain ATCC 700007 / DSM 6899 / JCM 31910 / BCRC 17059 / LMG 24140 / F1)).